The primary structure comprises 209 residues: Small ribosomal subunit protein uS4 (209 aa).

The S4 RNA-binding domain occupies Arg99–Gln160.

Belongs to the universal ribosomal protein uS4 family. As to quaternary structure, part of the 30S ribosomal subunit. Contacts protein S5. The interaction surface between S4 and S5 is involved in control of translational fidelity.

Functionally, one of the primary rRNA binding proteins, it binds directly to 16S rRNA where it nucleates assembly of the body of the 30S subunit. In terms of biological role, with S5 and S12 plays an important role in translational accuracy. The sequence is that of Small ribosomal subunit protein uS4 from Koribacter versatilis (strain Ellin345).